The sequence spans 106 residues: Large ribosomal subunit protein eL42 (106 aa).

The protein belongs to the eukaryotic ribosomal protein eL42 family.

This Schwanniomyces occidentalis (Yeast) protein is Large ribosomal subunit protein eL42 (RPL44).